The chain runs to 591 residues: V-type ATP synthase alpha chain (591 aa).

233–240 (GPFGAGKT) is a binding site for ATP.

Belongs to the ATPase alpha/beta chains family.

It catalyses the reaction ATP + H2O + 4 H(+)(in) = ADP + phosphate + 5 H(+)(out). Functionally, produces ATP from ADP in the presence of a proton gradient across the membrane. The V-type alpha chain is a catalytic subunit. The chain is V-type ATP synthase alpha chain from Streptococcus pyogenes serotype M28 (strain MGAS6180).